The primary structure comprises 246 residues: Adenosylcobinamide-GDP ribazoletransferase (246 aa).

Transmembrane regions (helical) follow at residues 34–54 (IVTF…VALL), 59–79 (CGVP…TGGF), 113–133 (GGLA…ELLL), 138–158 (PIAA…LLMY), 171–191 (LFIG…GVAL), and 194–214 (VLLG…IWGL).

It belongs to the CobS family. Requires Mg(2+) as cofactor.

The protein localises to the cell inner membrane. The enzyme catalyses alpha-ribazole + adenosylcob(III)inamide-GDP = adenosylcob(III)alamin + GMP + H(+). It catalyses the reaction alpha-ribazole 5'-phosphate + adenosylcob(III)inamide-GDP = adenosylcob(III)alamin 5'-phosphate + GMP + H(+). It participates in cofactor biosynthesis; adenosylcobalamin biosynthesis; adenosylcobalamin from cob(II)yrinate a,c-diamide: step 7/7. Its function is as follows. Joins adenosylcobinamide-GDP and alpha-ribazole to generate adenosylcobalamin (Ado-cobalamin). Also synthesizes adenosylcobalamin 5'-phosphate from adenosylcobinamide-GDP and alpha-ribazole 5'-phosphate. In Klebsiella pneumoniae (strain 342), this protein is Adenosylcobinamide-GDP ribazoletransferase.